The primary structure comprises 61 residues: Small ribosomal subunit protein uS14B (61 aa).

Zn(2+)-binding residues include Cys24, Cys27, Cys40, and Cys43.

It belongs to the universal ribosomal protein uS14 family. Zinc-binding uS14 subfamily. As to quaternary structure, part of the 30S ribosomal subunit. Contacts proteins S3 and S10. Zn(2+) is required as a cofactor.

Binds 16S rRNA, required for the assembly of 30S particles and may also be responsible for determining the conformation of the 16S rRNA at the A site. This is Small ribosomal subunit protein uS14B from Nocardia farcinica (strain IFM 10152).